Here is a 181-residue protein sequence, read N- to C-terminus: Ferritin BfrB (181 aa).

Positions Met-15 to Gly-150 constitute a Ferritin-like diiron domain. Residues Glu-22, Glu-55, His-58, Glu-99, and Gln-132 each contribute to the Fe cation site.

It belongs to the ferritin family. Prokaryotic subfamily. As to quaternary structure, homooligomer of 24 subunits that are packed together to form an approximately spherical molecule with a central cavity, in which large amounts of iron can be stored.

The enzyme catalyses 4 Fe(2+) + O2 + 4 H(+) = 4 Fe(3+) + 2 H2O. Its function is as follows. Iron-storage protein that displays ferroxidase activity, catalyzing the oxidation of Fe(2+) ions into Fe(3+) ions, that can then be deposited as a ferric-oxide mineral core within the central cavity of the protein complex. This chain is Ferritin BfrB (bfrB), found in Mycobacterium tuberculosis (strain ATCC 35801 / TMC 107 / Erdman).